A 235-amino-acid chain; its full sequence is Ribonuclease 3 (235 aa).

The RNase III domain occupies 7–135; it reads FAALEARLGH…VVAAVYLDGG (129 aa). Position 48 (Glu48) interacts with Mg(2+). Residue Asp52 is part of the active site. Mg(2+) is bound by residues Asp121 and Glu124. Glu124 is an active-site residue. In terms of domain architecture, DRBM spans 160–229; the sequence is DPKTVLQEWA…ASAFLAREGV (70 aa).

This sequence belongs to the ribonuclease III family. Homodimer. Mg(2+) is required as a cofactor.

The protein resides in the cytoplasm. The enzyme catalyses Endonucleolytic cleavage to 5'-phosphomonoester.. Digests double-stranded RNA. Involved in the processing of primary rRNA transcript to yield the immediate precursors to the large and small rRNAs (23S and 16S). Processes some mRNAs, and tRNAs when they are encoded in the rRNA operon. Processes pre-crRNA and tracrRNA of type II CRISPR loci if present in the organism. In Azorhizobium caulinodans (strain ATCC 43989 / DSM 5975 / JCM 20966 / LMG 6465 / NBRC 14845 / NCIMB 13405 / ORS 571), this protein is Ribonuclease 3.